The primary structure comprises 2617 residues: Non-reducing polyketide synthase epaA (2617 aa).

Residues 95–231 are N-terminal acylcarrier protein transacylase domain (SAT); it reads PNILLSPMVV…AARSISSLQQ (137 aa). The Nucleophile; for transacylase activity role is filled by Cys132. The active-site Proton donor/acceptor; for transacylase activity is the His250. The 419-residue stretch at 372–790 folds into the Ketosynthase family 3 (KS3) domain; sequence PNEIAVIGMS…GSNASMVVAQ (419 aa). Active-site for beta-ketoacyl synthase activity residues include Cys539, His674, and His713. Residues 902 to 1193 are malonyl-CoA:ACP transacylase (MAT) domain; it reads FGGQISNYVG…ITSMASRALG (292 aa). The interval 1282 to 1413 is N-terminal hotdog fold; the sequence is PKTLWSLIEA…GKLAFLSGQD (132 aa). The 310-residue stretch at 1282 to 1591 folds into the PKS/mFAS DH domain; sequence PKTLWSLIEA…YHKVAKASMS (310 aa). Residues 1310–1589 are product template (PT) domain; that stretch reads LVSGHVIANT…INYHKVAKAS (280 aa). The Proton acceptor; for dehydratase activity role is filled by His1314. The C-terminal hotdog fold stretch occupies residues 1443–1591; sequence ADDIIQGRNI…YHKVAKASMS (149 aa). The active-site Proton donor; for dehydratase activity is the Asp1499. The interval 1600-1651 is disordered; that stretch reads TEAAPSSSTRAHPTSSSSPRLPGPSVPEDKSQNETQPAGTNAVAKKKSEKSA. Low complexity predominate over residues 1602–1619; that stretch reads AAPSSSTRAHPTSSSSPR. Residues 1653 to 1727 form the Carrier domain; the sequence is QNVLEKTRAL…GLVEYVQSAV (75 aa). Ser1687 bears the O-(pantetheine 4'-phosphoryl)serine mark. Residues 1728–1799 are disordered; it reads GVPTNGDEPD…PAMPPASSKT (72 aa). The segment covering 1750 to 1766 has biased composition (low complexity); that stretch reads LAPSPSSSSSSTNLTED. A compositionally biased stretch (polar residues) spans 1769–1785; sequence LDQAETTTNISSYPGQT. A methyltransferase domain region spans residues 1970 to 2158; that stretch reads DSLLNKLSYR…VGYGQVDWTD (189 aa). The interval 2240 to 2485 is NADPH-binding (R) domain; that stretch reads ITGATGSLGV…LCWTPVNDVA (246 aa).

Pantetheine 4'-phosphate is required as a cofactor.

It functions in the pathway secondary metabolite biosynthesis. Its function is as follows. Non-reducing polyketide synthase; part of the gene cluster that mediates the biosynthesis of nigerpyrone and its derivatives carbonarone A and pestalamide A. The biosynthesis pathway begins with the polyketide assembly by epaA to form phenylacetyl triketide precursor from successive condensation of two malonyl-CoA, presumably with one phenylacetyl-CoA starter unit produced by the phenylacetyl-CoA ligase epaB. For the nigerpyrone biosynthesis, the reactive polyketide chain is released as an aldehyde through the R-domain. A nonenzymatic cyclization and dehydration may create nigerpyrone. For the biosynthesis of carbonarone A and pestalamide A, an extra methyl group is added through the C-methyltransferase domain. Several further steps involving the dehydrogenase orf1, the cytochrome P450 monooxygenase orf2 and the FAD-dependent monooxygenase orf3 are required to form a carbonarone A precursor which is converted to carbonarone A via cyclization. The O-acetyltransferase epaC could catalyze the transfer of 2-methylsuccinyl-CoA, a common intermediate in the ethylmalonyl-CoA pathway, to generate the final product pestalamide A. This is Non-reducing polyketide synthase epaA from Aspergillus niger (strain ATCC MYA-4892 / CBS 513.88 / FGSC A1513).